Consider the following 171-residue polypeptide: Putative antiporter subunit mnhG2 (171 aa).

3 helical membrane passes run 11-31, 51-71, and 72-92; these read IAAL…IGIV, VLLT…FFSV, and RLLL…HLVA. The span at 144–156 shows a compositional bias: basic and acidic residues; it reads DVQKQRQKEKQQE. Positions 144–171 are disordered; that stretch reads DVQKQRQKEKQQEENIESLSEARRETKD.

It belongs to the CPA3 antiporters (TC 2.A.63) subunit G family. In terms of assembly, may form a heterooligomeric complex that consists of seven subunits: mnhA2, mnhB2, mnhC2, mnhD2, mnhE2, mnhF2 and mnhG2.

It is found in the cell membrane. This chain is Putative antiporter subunit mnhG2 (mnhG2), found in Staphylococcus haemolyticus (strain JCSC1435).